The chain runs to 354 residues: ATPase GET3 (354 aa).

Residue 26-33 (KGGVGKTT) participates in ATP binding. The active site involves Asp-57. ATP contacts are provided by Glu-245 and Asn-272. Zn(2+) contacts are provided by Cys-285 and Cys-288.

Belongs to the arsA ATPase family. In terms of assembly, homodimer. Component of the Golgi to ER traffic (GET) complex, which is composed of GET1, GET2 and GET3. Within the complex, GET1 and GET2 form a heterotetramer which is stabilized by phosphatidylinositol binding and which binds to the GET3 homodimer. Interacts with the chloride channel protein GEF1.

It is found in the cytoplasm. The protein resides in the endoplasmic reticulum. It localises to the golgi apparatus. Its function is as follows. ATPase required for the post-translational delivery of tail-anchored (TA) proteins to the endoplasmic reticulum. Recognizes and selectively binds the transmembrane domain of TA proteins in the cytosol. This complex then targets to the endoplasmic reticulum by membrane-bound receptors GET1 and GET2, where the tail-anchored protein is released for insertion. This process is regulated by ATP binding and hydrolysis. ATP binding drives the homodimer towards the closed dimer state, facilitating recognition of newly synthesized TA membrane proteins. ATP hydrolysis is required for insertion. Subsequently, the homodimer reverts towards the open dimer state, lowering its affinity for the GET1-GET2 receptor, and returning it to the cytosol to initiate a new round of targeting. Cooperates with the HDEL receptor ERD2 to mediate the ATP-dependent retrieval of resident ER proteins that contain a C-terminal H-D-E-L retention signal from the Golgi to the ER. Involved in low-level resistance to the oxyanions arsenite and arsenate, and in heat tolerance. The sequence is that of ATPase GET3 from Saccharomyces cerevisiae (strain RM11-1a) (Baker's yeast).